We begin with the raw amino-acid sequence, 189 residues long: UPF0301 protein RP032 (189 aa).

Belongs to the UPF0301 (AlgH) family.

The polypeptide is UPF0301 protein RP032 (Rickettsia prowazekii (strain Madrid E)).